The sequence spans 239 residues: Fatty acid metabolism regulator protein (239 aa).

Residues 6–74 (QSPAGFAEEY…HGKPTQVNNF (69 aa)) enclose the HTH gntR-type domain. A DNA-binding region (H-T-H motif) is located at residues 34 to 53 (ERELSELIGVTRTTLREVLQ).

Homodimer.

The protein resides in the cytoplasm. Functionally, multifunctional regulator of fatty acid metabolism. This is Fatty acid metabolism regulator protein from Edwardsiella ictaluri (strain 93-146).